Consider the following 388-residue polypeptide: 4-hydroxy-3-methylbut-2-en-1-yl diphosphate synthase (flavodoxin) (388 aa).

[4Fe-4S] cluster-binding residues include C281, C284, C316, and E323.

The protein belongs to the IspG family. Requires [4Fe-4S] cluster as cofactor.

It carries out the reaction (2E)-4-hydroxy-3-methylbut-2-enyl diphosphate + oxidized [flavodoxin] + H2O + 2 H(+) = 2-C-methyl-D-erythritol 2,4-cyclic diphosphate + reduced [flavodoxin]. The protein operates within isoprenoid biosynthesis; isopentenyl diphosphate biosynthesis via DXP pathway; isopentenyl diphosphate from 1-deoxy-D-xylulose 5-phosphate: step 5/6. Functionally, converts 2C-methyl-D-erythritol 2,4-cyclodiphosphate (ME-2,4cPP) into 1-hydroxy-2-methyl-2-(E)-butenyl 4-diphosphate. This Arthrobacter sp. (strain FB24) protein is 4-hydroxy-3-methylbut-2-en-1-yl diphosphate synthase (flavodoxin).